Here is a 173-residue protein sequence, read N- to C-terminus: Mediator of RNA polymerase II transcription subunit 19 (173 aa).

The disordered stretch occupies residues 139–173 (LMRGDDMSENDEFGARRSKRKKKAQNGTDSKRQHI).

Belongs to the Mediator complex subunit 19 family. As to quaternary structure, component of the Mediator complex.

It is found in the nucleus. In terms of biological role, component of the Mediator complex, a coactivator involved in the regulated transcription of nearly all RNA polymerase II-dependent genes. Mediator functions as a bridge to convey information from gene-specific regulatory proteins to the basal RNA polymerase II transcription machinery. Mediator is recruited to promoters by direct interactions with regulatory proteins and serves as a scaffold for the assembly of a functional preinitiation complex with RNA polymerase II and the general transcription factors. In Scheffersomyces stipitis (strain ATCC 58785 / CBS 6054 / NBRC 10063 / NRRL Y-11545) (Yeast), this protein is Mediator of RNA polymerase II transcription subunit 19 (ROX3).